A 529-amino-acid polypeptide reads, in one-letter code: tRNA pseudouridine synthase Pus10 (529 aa).

Positions 21 and 24 each coordinate Zn(2+). The stretch at 42–89 (KELLNELQKFLETEKDELILEVMNPPPKKIRLQELEDSIDNLSQNGEG) forms a coiled coil. 2 positions are modified to phosphoserine: serine 79 and serine 84. Residues cysteine 109 and cysteine 112 each contribute to the Zn(2+) site. An RNA binding forefinger loop region spans residues 304–317 (TPWIIDGERKLESS). The active-site Nucleophile is aspartate 344. Residues 442–457 (QKTPLRVLHRRPLAVR) are RNA binding thumb loop.

The protein belongs to the pseudouridine synthase Pus10 family. As to quaternary structure, interacts with components of the microprocessor complex DROSHA and DGCR8. Post-translationally, proteolytically cleaved during TRAIL-induced cell death. Cleaved, in vitro, either by caspase-3 (CASP3) or caspase-8 (CASP8).

It localises to the nucleus. It is found in the cytoplasm. The protein resides in the mitochondrion. It catalyses the reaction uridine(55) in tRNA = pseudouridine(55) in tRNA. The enzyme catalyses uridine(54) in tRNA = pseudouridine(54) in tRNA. Protein with different functions depending on its subcellular location: involved in miRNA processing in the nucleus and acts as a tRNA pseudouridylate synthase in the cytoplasm. In the cytoplasm, acts as a pseudouridylate synthase by catalyzing synthesis of pseudouridine(54) and pseudouridine(55) from uracil-54 and uracil-55, respectively, in the psi GC loop of a subset of tRNAs. tRNA pseudouridylate synthase activity is enhanced by the presence of 1-methyladenosine at position 53-61 of tRNAs. Does not show tRNA pseudouridylate synthase activity in the nucleus. In the nucleus, promotes primary microRNAs (pri-miRNAs) processing independently of its RNA pseudouridylate synthase activity. Binds pri-miRNAs. Modulator of TRAIL/TNFSF10-induced cell death via activation of procaspase-8 and BID cleavage. Required for the progression of the apoptotic signal through intrinsic mitochondrial cell death. The sequence is that of tRNA pseudouridine synthase Pus10 from Homo sapiens (Human).